The chain runs to 241 residues: Probable transcriptional regulatory protein PSHAb0060 (241 aa).

The protein belongs to the TACO1 family.

The protein localises to the cytoplasm. This is Probable transcriptional regulatory protein PSHAb0060 from Pseudoalteromonas translucida (strain TAC 125).